The following is a 121-amino-acid chain: Large ribosomal subunit protein bL12 (121 aa).

The protein belongs to the bacterial ribosomal protein bL12 family. In terms of assembly, homodimer. Part of the ribosomal stalk of the 50S ribosomal subunit. Forms a multimeric L10(L12)X complex, where L10 forms an elongated spine to which 2 to 4 L12 dimers bind in a sequential fashion. Binds GTP-bound translation factors.

Forms part of the ribosomal stalk which helps the ribosome interact with GTP-bound translation factors. Is thus essential for accurate translation. The protein is Large ribosomal subunit protein bL12 of Pectobacterium carotovorum subsp. carotovorum (strain PC1).